Here is a 458-residue protein sequence, read N- to C-terminus: Phosphoglucosamine mutase (458 aa).

The active-site Phosphoserine intermediate is S106. Positions 106, 247, 249, and 251 each coordinate Mg(2+). Phosphoserine is present on S106.

Belongs to the phosphohexose mutase family. Requires Mg(2+) as cofactor. Post-translationally, activated by phosphorylation.

It catalyses the reaction alpha-D-glucosamine 1-phosphate = D-glucosamine 6-phosphate. In terms of biological role, catalyzes the conversion of glucosamine-6-phosphate to glucosamine-1-phosphate. The polypeptide is Phosphoglucosamine mutase (Chlamydia trachomatis serovar A (strain ATCC VR-571B / DSM 19440 / HAR-13)).